A 154-amino-acid chain; its full sequence is Myoglobin (154 aa).

The region spanning 2–148 (GLSDGEWELV…FRNDIAAKYK (147 aa)) is the Globin domain. S4 is subject to Phosphoserine. Phosphothreonine is present on T68. H94 contacts heme b.

This sequence belongs to the globin family. In terms of assembly, monomeric.

It is found in the cytoplasm. Its subcellular location is the sarcoplasm. It carries out the reaction Fe(III)-heme b-[protein] + nitric oxide + H2O = Fe(II)-heme b-[protein] + nitrite + 2 H(+). The enzyme catalyses H2O2 + AH2 = A + 2 H2O. Functionally, monomeric heme protein which primary function is to store oxygen and facilitate its diffusion within muscle tissues. Reversibly binds oxygen through a pentacoordinated heme iron and enables its timely and efficient release as needed during periods of heightened demand. Depending on the oxidative conditions of tissues and cells, and in addition to its ability to bind oxygen, it also has a nitrite reductase activity whereby it regulates the production of bioactive nitric oxide. Under stress conditions, like hypoxia and anoxia, it also protects cells against reactive oxygen species thanks to its pseudoperoxidase activity. The protein is Myoglobin (MB) of Loxodonta africana (African elephant).